The chain runs to 548 residues: Splicing factor U2af large subunit B (548 aa).

The span at 1-82 shows a compositional bias: basic and acidic residues; that stretch reads MADDHAAAAD…DRDRDRDKDR (82 aa). Residues 1–156 form a disordered region; it reads MADDHAAAAD…SKRVSGFDMA (156 aa). Residues 83 to 93 show a composition bias toward basic residues; sequence DRHHRHHRERR. The span at 94–120 shows a compositional bias: basic and acidic residues; it reads EHRDRSDDHDRHRSRDSERRRDHERDG. A compositionally biased stretch (basic residues) spans 121 to 149; it reads RRRHRSRSRSRSRGRDRRSRSRSRSKSKR. RRM domains are found at residues 214–297, 334–412, and 453–539; these read RRVY…RPTD, DRIF…RANQ, and QVVS…YPEN.

The protein belongs to the splicing factor SR family.

Its subcellular location is the nucleus. Its function is as follows. Necessary for the splicing of pre-mRNA. This Oryza sativa subsp. japonica (Rice) protein is Splicing factor U2af large subunit B (U2AF65B).